A 274-amino-acid polypeptide reads, in one-letter code: THAP domain-containing protein 8 (274 aa).

Residues 1 to 85 form a THAP-type zinc finger; the sequence is MPKYCRAPNC…LRPDAVPSIF (85 aa). The disordered stretch occupies residues 83-121; the sequence is SIFSRGPPAKSQRRTRSTQKPVSPPPPLQKNTPLPQSPA.

The polypeptide is THAP domain-containing protein 8 (THAP8) (Homo sapiens (Human)).